A 409-amino-acid chain; its full sequence is Glucose-1-phosphate adenylyltransferase (409 aa).

Alpha-D-glucose 1-phosphate contacts are provided by residues G168, 183–184, and S201; that span reads EK.

This sequence belongs to the bacterial/plant glucose-1-phosphate adenylyltransferase family. Homotetramer.

The enzyme catalyses alpha-D-glucose 1-phosphate + ATP + H(+) = ADP-alpha-D-glucose + diphosphate. The protein operates within glycan biosynthesis; glycogen biosynthesis. In terms of biological role, involved in the biosynthesis of ADP-glucose, a building block required for the elongation reactions to produce glycogen. Catalyzes the reaction between ATP and alpha-D-glucose 1-phosphate (G1P) to produce pyrophosphate and ADP-Glc. The protein is Glucose-1-phosphate adenylyltransferase of Corynebacterium glutamicum (strain R).